The primary structure comprises 226 residues: PKHD-type hydroxylase AZC_3753 (226 aa).

One can recognise a Fe2OG dioxygenase domain in the interval 78 to 178 (RILPPMFNRY…RVASFFWTQS (101 aa)). 3 residues coordinate Fe cation: histidine 96, aspartate 98, and histidine 159. Arginine 169 is a binding site for 2-oxoglutarate.

Fe(2+) is required as a cofactor. The cofactor is L-ascorbate.

The sequence is that of PKHD-type hydroxylase AZC_3753 from Azorhizobium caulinodans (strain ATCC 43989 / DSM 5975 / JCM 20966 / LMG 6465 / NBRC 14845 / NCIMB 13405 / ORS 571).